Reading from the N-terminus, the 238-residue chain is NAD(P)H-quinone oxidoreductase subunit K 1 (238 aa).

The [4Fe-4S] cluster site is built by C54, C55, C119, and C150.

This sequence belongs to the complex I 20 kDa subunit family. As to quaternary structure, NDH-1 can be composed of about 15 different subunits; different subcomplexes with different compositions have been identified which probably have different functions. [4Fe-4S] cluster serves as cofactor.

The protein resides in the cellular thylakoid membrane. It catalyses the reaction a plastoquinone + NADH + (n+1) H(+)(in) = a plastoquinol + NAD(+) + n H(+)(out). The catalysed reaction is a plastoquinone + NADPH + (n+1) H(+)(in) = a plastoquinol + NADP(+) + n H(+)(out). Functionally, NDH-1 shuttles electrons from an unknown electron donor, via FMN and iron-sulfur (Fe-S) centers, to quinones in the respiratory and/or the photosynthetic chain. The immediate electron acceptor for the enzyme in this species is believed to be plastoquinone. Couples the redox reaction to proton translocation, and thus conserves the redox energy in a proton gradient. Cyanobacterial NDH-1 also plays a role in inorganic carbon-concentration. This chain is NAD(P)H-quinone oxidoreductase subunit K 1, found in Cyanothece sp. (strain PCC 7425 / ATCC 29141).